The following is a 182-amino-acid chain: Troponin I, fast skeletal muscle (182 aa).

The residue at position 2 (G2) is an N-acetylglycine. Positions 2 to 48 are involved in binding TNC; sequence GDEEKRNRAITARRQHLKSVMLQIAATELEKEESRRESEKENYLSEH. Phosphothreonine is present on T12. Over residues 29–45 the composition is skewed to basic and acidic residues; sequence ELEKEESRRESEKENYL. Residues 29–53 are disordered; that stretch reads ELEKEESRRESEKENYLSEHCPPLH. Residues 97–117 form an involved in binding TNC and actin region; it reads NQKLFDLRGKFKRPPLRRVRM. S118 is modified (phosphoserine).

The protein belongs to the troponin I family. In terms of assembly, binds to actin and tropomyosin.

Its function is as follows. Troponin I is the inhibitory subunit of troponin, the thin filament regulatory complex which confers calcium-sensitivity to striated muscle actomyosin ATPase activity. In Mus musculus (Mouse), this protein is Troponin I, fast skeletal muscle (Tnni2).